The chain runs to 372 residues: tRNA-specific 2-thiouridylase MnmA (372 aa).

ATP-binding positions include 16–23 and Met-42; that span reads GMSGGVDS. The tract at residues 102–104 is interaction with target base in tRNA; the sequence is NPD. The active-site Nucleophile is Cys-107. The cysteines at positions 107 and 205 are disulfide-linked. Position 132 (Gly-132) interacts with ATP. An interaction with tRNA region spans residues 155–157; that stretch reads KDQ. The Cysteine persulfide intermediate role is filled by Cys-205. Residues 317 to 318 form an interaction with tRNA region; the sequence is RY.

The protein belongs to the MnmA/TRMU family.

The protein resides in the cytoplasm. The catalysed reaction is S-sulfanyl-L-cysteinyl-[protein] + uridine(34) in tRNA + AH2 + ATP = 2-thiouridine(34) in tRNA + L-cysteinyl-[protein] + A + AMP + diphosphate + H(+). Its function is as follows. Catalyzes the 2-thiolation of uridine at the wobble position (U34) of tRNA, leading to the formation of s(2)U34. This is tRNA-specific 2-thiouridylase MnmA from Shewanella frigidimarina (strain NCIMB 400).